A 545-amino-acid chain; its full sequence is Carboxylesterase 5A (545 aa).

Residues 1–28 form the signal peptide; sequence MSGMWVHPGRTLIWALWVLAAVIKGPAA. Asn86 is a glycosylation site (N-linked (GlcNAc...) (complex) asparagine). Cys94 and Cys121 are joined by a disulfide. Asn134 is a glycosylation site (N-linked (GlcNAc...) asparagine). Catalysis depends on Ser226, which acts as the Acyl-ester intermediate. A disulfide bridge links Cys281 with Cys292. The Charge relay system role is filled by Glu346. Residues Asn363 and Asn443 are each glycosylated (N-linked (GlcNAc...) asparagine). The Charge relay system role is filled by His454.

The protein belongs to the type-B carboxylesterase/lipase family. Post-translationally, N-glycosylated; contains a fucosylated complex carbohydrate. As to expression, present at high level in urine. Expressed in the kidney proximal straight tubular cells and is secreted from the apical compartment of the cells into the urine (at protein level). In mature cats, it is present at higher level in intact males than in castrated males or in intact or spayed females.

Its subcellular location is the secreted. The enzyme catalyses a carboxylic ester + H2O = an alcohol + a carboxylate + H(+). Functionally, carboxylesterase present at high level in urine that regulates production of felinine, a probable pheromone precursor. Probably acts by hydrolyzing the peptide bond of the felinine precursor 3-methylbutanol cyteinylglycine, producing felinine and glycine in cat urine. The protein is Carboxylesterase 5A (CES5A) of Felis catus (Cat).